The chain runs to 149 residues: MKYTRHSKILELIDKNEIETQEELSERLKDMGFTVTQATVSRDIKELRLIKVLTKNGKYKYATLQSQENILSDRVVKIFKNSVVSIDYAGNLIVIKTLTGSAQAAAAAIDAGDMNDVVGTIAGDDTIFIVIRDEKNVPSTIEHFRKLMK.

Belongs to the ArgR family.

It is found in the cytoplasm. Its pathway is amino-acid biosynthesis; L-arginine biosynthesis [regulation]. Functionally, regulates arginine biosynthesis genes. This chain is Arginine repressor, found in Alkaliphilus oremlandii (strain OhILAs) (Clostridium oremlandii (strain OhILAs)).